Consider the following 257-residue polypeptide: Zinc transporter ZupT (257 aa).

Helical transmembrane passes span 5-25 (LILT…AVLG), 32-52 (VLAF…LMEM), 61-81 (GMSP…YFGL), 109-129 (AILL…ATFV), and 137-157 (LGMG…LAVA). Asparagine 120 and glutamate 123 together coordinate Fe(2+). Positions 123 and 148 each coordinate Zn(2+). Fe(2+)-binding residues include asparagine 149, glutamate 152, and glutamate 181. Residue glutamate 152 coordinates Zn(2+). Transmembrane regions (helical) follow at residues 182 to 202 (ILGG…VVMA), 203 to 223 (AVMA…LMPL), and 236 to 256 (GVLC…TAGI).

Belongs to the ZIP transporter (TC 2.A.5) family. ZupT subfamily.

It is found in the cell inner membrane. The catalysed reaction is Zn(2+)(in) = Zn(2+)(out). Functionally, mediates zinc uptake. May also transport other divalent cations. This is Zinc transporter ZupT from Escherichia fergusonii (strain ATCC 35469 / DSM 13698 / CCUG 18766 / IAM 14443 / JCM 21226 / LMG 7866 / NBRC 102419 / NCTC 12128 / CDC 0568-73).